We begin with the raw amino-acid sequence, 429 residues long: Serine--tRNA ligase (429 aa).

234–236 contributes to the L-serine binding site; it reads TSE. ATP-binding positions include 265–267 and V281; that span reads RKE. E288 is an L-serine binding site. 352-355 contacts ATP; the sequence is ELVS. T389 is a binding site for L-serine.

This sequence belongs to the class-II aminoacyl-tRNA synthetase family. Type-1 seryl-tRNA synthetase subfamily. Homodimer. The tRNA molecule probably binds across the dimer.

It catalyses the reaction tRNA(Ser) + L-serine + ATP = L-seryl-tRNA(Ser) + AMP + diphosphate + H(+). It carries out the reaction tRNA(Sec) + L-serine + ATP = L-seryl-tRNA(Sec) + AMP + diphosphate + H(+). The protein operates within aminoacyl-tRNA biosynthesis; selenocysteinyl-tRNA(Sec) biosynthesis; L-seryl-tRNA(Sec) from L-serine and tRNA(Sec): step 1/1. Its function is as follows. Catalyzes the attachment of serine to tRNA(Ser). Is also probably able to aminoacylate tRNA(Sec) with serine, to form the misacylated tRNA L-seryl-tRNA(Sec), which will be further converted into selenocysteinyl-tRNA(Sec). This is Serine--tRNA ligase from Encephalitozoon cuniculi (strain GB-M1) (Microsporidian parasite).